A 268-amino-acid chain; its full sequence is Speedy protein E4A (268 aa).

2 disordered regions span residues 1–26 and 43–97; these read MGEGTPGVDSARVQEEGGRDQSLGFV and LCSE…LDSE. The span at 43 to 52 shows a compositional bias: polar residues; the sequence is LCSEEQSPQP. Residues 134–265 form a speedy/Ringo box; Required for CDK-binding region; that stretch reads PEHHKVFTKL…DLWVWARDRT (132 aa).

It belongs to the Speedy/Ringo family. Interacts with CDK1. Does not interact with CDK2 in vivo. As to expression, testis-specific.

It localises to the nucleus. Its function is as follows. Promotes progression through the cell cycle via binding and activation of CDK1. This Mus musculus (Mouse) protein is Speedy protein E4A.